The primary structure comprises 632 residues: Probable potassium transport system protein Kup 1 (632 aa).

12 helical membrane-spanning segments follow: residues 19–39, 59–79, 110–130, 146–166, 178–198, 213–233, 256–276, 298–318, 346–366, 373–393, 403–423, and 428–448; these read LVLG…LYAL, VISM…VVFV, VLMM…VITP, PQLS…LFLI, FGPI…LHLV, ITFL…VFLV, WFVL…AMLL, MVLL…SGAF, IYLP…VISF, AAAY…LAAV, PALV…FFAA, and VAEG…LLMT.

Belongs to the HAK/KUP transporter (TC 2.A.72) family.

It localises to the cell inner membrane. It catalyses the reaction K(+)(in) + H(+)(in) = K(+)(out) + H(+)(out). In terms of biological role, transport of potassium into the cell. Likely operates as a K(+):H(+) symporter. This is Probable potassium transport system protein Kup 1 from Cupriavidus necator (strain ATCC 17699 / DSM 428 / KCTC 22496 / NCIMB 10442 / H16 / Stanier 337) (Ralstonia eutropha).